Consider the following 235-residue polypeptide: Large ribosomal subunit protein uL1 (235 aa).

Belongs to the universal ribosomal protein uL1 family. Part of the 50S ribosomal subunit.

Functionally, binds directly to 23S rRNA. The L1 stalk is quite mobile in the ribosome, and is involved in E site tRNA release. In terms of biological role, protein L1 is also a translational repressor protein, it controls the translation of the L11 operon by binding to its mRNA. This Synechococcus sp. (strain CC9902) protein is Large ribosomal subunit protein uL1.